Reading from the N-terminus, the 1406-residue chain is Ubiquitin carboxyl-terminal hydrolase 6 (1406 aa).

Residues 100 to 292 (GIPMNIRGPV…RLWDVYLVEG (193 aa)) enclose the Rab-GAP TBC domain. The tract at residues 348 to 380 (KLTRKQGDLPPPAKREQGSLAPRPVPASRGGKT) is disordered. The 838-residue stretch at 532–1369 (TGLSNLGNTC…SAYILFYEQQ (838 aa)) folds into the USP domain. The active-site Nucleophile is Cys-541. The disordered stretch occupies residues 1120–1231 (HKPLTPQGDE…KKNLDASKEN (112 aa)). The span at 1129-1155 (ELSKPRILAREVKKVDAQSSAGKEDML) shows a compositional bias: basic and acidic residues. The segment covering 1156–1197 (LSKSPSSLSANISSSPKGSPSSSRKSGTSCPSSKNSSPNSSP) has biased composition (low complexity). Residue His-1328 is the Proton acceptor of the active site. Residues 1384–1406 (KMADTSSTDEDSESDYEKYSMLQ) are disordered.

This sequence belongs to the peptidase C19 family. Interacts with RAC1 and CDC42. Interacts (via Rab-GAP TBC domain) with ARF6. Interacts with calmodulin (CALM1, CALM2 and/or CALM3); the interaction is calcium-dependent. Monubiquitinated; ubiquitination is calmodulin and calcium dependent. As to expression, testis specific. Expressed in various cancer cell lines.

Its subcellular location is the cell membrane. The protein resides in the cytoplasm. It localises to the endosome. The enzyme catalyses Thiol-dependent hydrolysis of ester, thioester, amide, peptide and isopeptide bonds formed by the C-terminal Gly of ubiquitin (a 76-residue protein attached to proteins as an intracellular targeting signal).. Deubiquitinase with an ATP-independent isopeptidase activity, cleaving at the C-terminus of the ubiquitin moiety. Catalyzes its own deubiquitination. In vitro, isoform 2, but not isoform 3, shows deubiquitinating activity. Promotes plasma membrane localization of ARF6 and selectively regulates ARF6-dependent endocytic protein trafficking. Is able to initiate tumorigenesis by inducing the production of matrix metalloproteinases following NF-kappa-B activation. May act as a GTPase-activating protein for RAB3A. This Homo sapiens (Human) protein is Ubiquitin carboxyl-terminal hydrolase 6 (USP6).